The sequence spans 474 residues: Probable periplasmic serine endoprotease DegP-like (474 aa).

The signal sequence occupies residues 1–26 (MTRMTRHLALWMLLSLAILASQSAMA). Active-site charge relay system residues include His116, Asp146, and Ser219. Substrate contacts are provided by residues 217–219 (GNS) and 274–278 (LGVMI). 2 consecutive PDZ domains span residues 263–354 (LRND…LRNG) and 360–462 (TVTV…YRSG).

Belongs to the peptidase S1C family.

It is found in the periplasm. The catalysed reaction is Acts on substrates that are at least partially unfolded. The cleavage site P1 residue is normally between a pair of hydrophobic residues, such as Val-|-Val.. In terms of biological role, might be efficient in the degradation of transiently denatured and unfolded proteins which accumulate in the periplasm following stress conditions. The chain is Probable periplasmic serine endoprotease DegP-like (mucD) from Halomonas elongata (strain ATCC 33173 / DSM 2581 / NBRC 15536 / NCIMB 2198 / 1H9).